The chain runs to 456 residues: Signal recognition particle 54 kDa protein (456 aa).

GTP contacts are provided by residues 104-111 (GLYGNGKT), 184-188 (DTSGR), and 242-245 (TKMD).

This sequence belongs to the GTP-binding SRP family. SRP54 subfamily. Part of the signal recognition particle protein translocation system, which is composed of SRP and FtsY. Archaeal SRP consists of a 7S RNA molecule of 300 nucleotides and two protein subunits: SRP54 and SRP19.

Its subcellular location is the cytoplasm. It catalyses the reaction GTP + H2O = GDP + phosphate + H(+). Involved in targeting and insertion of nascent membrane proteins into the cytoplasmic membrane. Binds to the hydrophobic signal sequence of the ribosome-nascent chain (RNC) as it emerges from the ribosomes. The SRP-RNC complex is then targeted to the cytoplasmic membrane where it interacts with the SRP receptor FtsY. This chain is Signal recognition particle 54 kDa protein, found in Thermoplasma acidophilum (strain ATCC 25905 / DSM 1728 / JCM 9062 / NBRC 15155 / AMRC-C165).